Consider the following 231-residue polypeptide: Eukaryotic translation initiation factor 4E-1 (231 aa).

EIF4G-binding regions lie at residues 56-59 and 66-102; these read HPLE and FDNP…NNIH. MRNA contacts are provided by residues 74–79, Lys106, and 124–125; these read RQTAWG and WE. The cysteines at positions 129 and 167 are disulfide-linked. Residues 150 to 159 form an EIF4G-binding region; the sequence is YTLLAMIGHQ. Residues 174 to 179 and 219 to 223 each bind mRNA; these read RAKGEK and KRLDR.

Belongs to the eukaryotic initiation factor 4E family. In terms of assembly, EIF4F is a multi-subunit complex, the composition of which varies with external and internal environmental conditions. It is composed of at least EIF4A, EIF4E and EIF4G. EIF4E is also known to interact with other partners. In higher plants two isoforms of EIF4F have been identified, named isoform EIF4F and isoform EIF(iso)4F. Isoform EIF4F has subunits p220 and p26, whereas isoform EIF(iso)4F has subunits p82 and p28. As to quaternary structure, (Microbial infection) Interacts with potyvirus viral genome-linked protein (VPg); mostly with tobacco etch virus (TEV-HAT) VPg and, to a lower extent, with potato virus Y (PVY-LYE84 and PVY-LYE90) and pepper mottle virus (PepMoV) VPg. Post-translationally, according to the redox status, the Cys-129-Cys-167 disulfide bridge may have a role in regulating protein function by affecting its ability to bind capped mRNA.

It is found in the nucleus. It localises to the cytoplasm. Its function is as follows. Component of the protein complex eIF4F, which is involved in the recognition of the mRNA cap, ATP-dependent unwinding of 5'-terminal secondary structure and recruitment of mRNA to the ribosome. Recognizes and binds the 7-methylguanosine-containing mRNA cap during an early step in the initiation of protein synthesis and facilitates ribosome binding by inducing the unwinding of the mRNAs secondary structures. Key component of recessive resistance to potyviruses. Functionally, (Microbial infection) Susceptibility host factor required for viral infection (e.g. potato virus Y (PVY), pepper mottle virus (PepMoV) and tobacco etch virus (TEV)) by recruiting viral RNAs to the host ribosomal complex via an interaction with viral genome-linked protein (VPg). The protein is Eukaryotic translation initiation factor 4E-1 of Solanum lycopersicum (Tomato).